A 128-amino-acid chain; its full sequence is Small ribosomal subunit protein uS14m (128 aa).

The protein belongs to the universal ribosomal protein uS14 family. Component of the mitochondrial small ribosomal subunit (mt-SSU). Mature mammalian 55S mitochondrial ribosomes consist of a small (28S) and a large (39S) subunit. The 28S small subunit contains a 12S ribosomal RNA (12S mt-rRNA) and 30 different proteins. The 39S large subunit contains a 16S rRNA (16S mt-rRNA), a copy of mitochondrial valine transfer RNA (mt-tRNA(Val)), which plays an integral structural role, and 52 different proteins. Interacts with LIAT1.

The protein resides in the mitochondrion. The protein is Small ribosomal subunit protein uS14m of Homo sapiens (Human).